We begin with the raw amino-acid sequence, 193 residues long: Interleukin-18 (193 aa).

Positions 1–36 (MAANLIEDNCINLVKMKFVNNTLYFKAESDEGLESD) are excised as a propeptide.

Belongs to the IL-1 family. As to quaternary structure, forms a ternary complex with ligand-binding receptor subunit IL18R1 and signaling receptor subunit IL18RAP at the plasma membrane. Mature IL18 first binds to IL18R1 forming a low affinity binary complex, which then interacts with IL18RAP to form a high affinity ternary complex that signals inside the cell. Interacts with cargo receptor TMED10; the interaction mediates the translocation from the cytoplasm into the ERGIC (endoplasmic reticulum-Golgi intermediate compartment) and thereby secretion. Post-translationally, the pro-IL-18 precursor is processed by CASP1, CASP4 or CASP5 to yield its mature, active form. The pro-IL-18 precursor features autoinhibitory interactions between the propeptide and the post-cleavage-site region, preventing recognition by the IL18R1 receptor. Processing by CASP1, CASP4 or CASP5 induces conformational changes to generate critical receptor-binding sites. The mature form is then secreted and released in the extracellular milieu by passing through the gasdermin-D (GSDMD) pore. In contrast, cleavage by CASP3 inactivates IL18.

It is found in the cytoplasm. The protein resides in the cytosol. Its subcellular location is the secreted. In terms of biological role, pro-inflammatory cytokine primarily involved in epithelial barrier repair, polarized T-helper 1 (Th1) cell and natural killer (NK) cell immune responses. Upon binding to IL18R1 and IL18RAP, forms a signaling ternary complex which activates NF-kappa-B, triggering synthesis of inflammatory mediators. Synergizes with IL12/interleukin-12 to induce IFNG synthesis from T-helper 1 (Th1) cells and natural killer (NK) cells. Involved in transduction of inflammation downstream of pyroptosis: its mature form is specifically released in the extracellular milieu by passing through the gasdermin-D (GSDMD) pore. This is Interleukin-18 (IL18) from Canis lupus familiaris (Dog).